Reading from the N-terminus, the 205-residue chain is ATP phosphoribosyltransferase (205 aa).

This sequence belongs to the ATP phosphoribosyltransferase family. Short subfamily. As to quaternary structure, heteromultimer composed of HisG and HisZ subunits.

Its subcellular location is the cytoplasm. It catalyses the reaction 1-(5-phospho-beta-D-ribosyl)-ATP + diphosphate = 5-phospho-alpha-D-ribose 1-diphosphate + ATP. The protein operates within amino-acid biosynthesis; L-histidine biosynthesis; L-histidine from 5-phospho-alpha-D-ribose 1-diphosphate: step 1/9. Catalyzes the condensation of ATP and 5-phosphoribose 1-diphosphate to form N'-(5'-phosphoribosyl)-ATP (PR-ATP). Has a crucial role in the pathway because the rate of histidine biosynthesis seems to be controlled primarily by regulation of HisG enzymatic activity. This is ATP phosphoribosyltransferase from Staphylococcus carnosus (strain TM300).